We begin with the raw amino-acid sequence, 99 residues long: DNA-binding protein Fis (99 aa).

Residues 75-94 (QTRAANMLGINRGTLRKKLK) constitute a DNA-binding region (H-T-H motif).

The protein belongs to the transcriptional regulatory Fis family. As to quaternary structure, homodimer.

Functionally, activates ribosomal RNA transcription. Plays a direct role in upstream activation of rRNA promoters. The polypeptide is DNA-binding protein Fis (Haemophilus influenzae (strain 86-028NP)).